The primary structure comprises 85 residues: Putative defensin-like protein 142 (85 aa).

Residues 1-24 form the signal peptide; sequence MKKSFLFTFTVLTIFTILVIGVAP. 4 cysteine pairs are disulfide-bonded: cysteine 30–cysteine 78, cysteine 41–cysteine 63, cysteine 46–cysteine 73, and cysteine 50–cysteine 75.

Belongs to the DEFL family.

It is found in the secreted. This chain is Putative defensin-like protein 142 (LCR34), found in Arabidopsis thaliana (Mouse-ear cress).